The primary structure comprises 832 residues: Elongation factor 2 (832 aa).

Positions 17-336 (HNIRNMSVIA…MIVTHLPSPA (320 aa)) constitute a tr-type G domain. 26–33 (AHVDHGKS) contributes to the GTP binding site. Phosphothreonine is present on residues Thr-57 and Thr-59. GTP is bound by residues 152 to 155 (NKVD) and 207 to 209 (SGL). The tract at residues 580–608 (AEPLPDGLTDDIEEGKVSPRDDPKERSNL) is disordered. The span at 593 to 608 (EGKVSPRDDPKERSNL) shows a compositional bias: basic and acidic residues. His-689 is subject to Diphthamide.

Belongs to the TRAFAC class translation factor GTPase superfamily. Classic translation factor GTPase family. EF-G/EF-2 subfamily.

It is found in the cytoplasm. The catalysed reaction is GTP + H2O = GDP + phosphate + H(+). Its function is as follows. Catalyzes the GTP-dependent ribosomal translocation step during translation elongation. During this step, the ribosome changes from the pre-translocational (PRE) to the post-translocational (POST) state as the newly formed A-site-bound peptidyl-tRNA and P-site-bound deacylated tRNA move to the P and E sites, respectively. Catalyzes the coordinated movement of the two tRNA molecules, the mRNA and conformational changes in the ribosome. This chain is Elongation factor 2, found in Cryptosporidium parvum.